The primary structure comprises 404 residues: Argininosuccinate synthase (404 aa).

ATP is bound by residues 11 to 19 and A40; that span reads AYSGGLDTS. The L-citrulline site is built by Y92 and S97. Residue G122 coordinates ATP. 3 residues coordinate L-aspartate: T124, N128, and D129. N128 serves as a coordination point for L-citrulline. Residues R132, S181, S190, E266, and Y278 each contribute to the L-citrulline site.

Belongs to the argininosuccinate synthase family. Type 1 subfamily. As to quaternary structure, homotetramer.

The protein localises to the cytoplasm. It catalyses the reaction L-citrulline + L-aspartate + ATP = 2-(N(omega)-L-arginino)succinate + AMP + diphosphate + H(+). It functions in the pathway amino-acid biosynthesis; L-arginine biosynthesis; L-arginine from L-ornithine and carbamoyl phosphate: step 2/3. This chain is Argininosuccinate synthase, found in Moritella abyssi.